We begin with the raw amino-acid sequence, 231 residues long: Endonuclease NucS (231 aa).

This sequence belongs to the NucS endonuclease family.

It localises to the cytoplasm. In terms of biological role, cleaves both 3' and 5' ssDNA extremities of branched DNA structures. The polypeptide is Endonuclease NucS (Micrococcus luteus (strain ATCC 4698 / DSM 20030 / JCM 1464 / CCM 169 / CCUG 5858 / IAM 1056 / NBRC 3333 / NCIMB 9278 / NCTC 2665 / VKM Ac-2230) (Micrococcus lysodeikticus)).